The chain runs to 123 residues: Hydrogenase maturation factor HypA (123 aa).

His-2 serves as a coordination point for Ni(2+). Positions 73, 76, 90, and 93 each coordinate Zn(2+).

It belongs to the HypA/HybF family.

In terms of biological role, involved in the maturation of [NiFe] hydrogenases. Required for nickel insertion into the metal center of the hydrogenase. This chain is Hydrogenase maturation factor HypA, found in Roseiflexus sp. (strain RS-1).